The sequence spans 151 residues: Neuroglobin (151 aa).

A Globin domain is found at 1–149 (MERPEPELIR…VVQAMSRGWD (149 aa)). Cys46 and Cys55 are oxidised to a cystine. Heme b-binding residues include His64 and His96.

It belongs to the globin family. In terms of assembly, monomer. Homodimer and homotetramer; disulfide-linked. Mainly monomeric but also detected as part of homodimers and homotetramers. Interacts with 14-3-3 proteins; regulates the phosphorylation of NGB. Could interact (ferrous form) with G-alpha(i) proteins (GTP-bound form). Post-translationally, phosphorylated during hypoxia by ERK1/ERK2. Phosphorylation regulates the heme pocket hexacoordination preventing the association of His-64 with the heme metal center. Thereby, promotes the access of dioxygen and nitrite to the heme and stimulates the nitrite reductase activity. Phosphorylation during hypoxia is stabilized by 14-3-3 proteins. In terms of processing, an intramolecular Cys-46/Cys-55 disulfide bond, not necessarily present in orthologs, regulates the heme pocket hexacoordination preventing the association of His-64 with the heme metal center. Thereby, promotes the access of dioxygen and nitrite to the heme and stimulates the nitrite reductase activity. In terms of tissue distribution, predominantly expressed in brain, the strongest expression is seen in the frontal lobe, the subthalamic nucleus and the thalamus.

It localises to the cytoplasm. The protein resides in the cytosol. It is found in the mitochondrion matrix. It catalyses the reaction Fe(III)-heme b-[protein] + nitric oxide + H2O = Fe(II)-heme b-[protein] + nitrite + 2 H(+). Monomeric globin with a bis-histidyl six-coordinate heme-iron atom through which it can bind dioxygen, carbon monoxide and nitric oxide. Could help transport oxygen and increase its availability to the metabolically active neuronal tissues, though its low quantity in tissues as well as its high affinity for dioxygen, which may limit its oxygen-releasing ability, argue against it. The ferrous/deoxygenated form exhibits a nitrite reductase activity and it could produce nitric oxide which in turn inhibits cellular respiration in response to hypoxia. In its ferrous/deoxygenated state, it may also exhibit GDI (Guanine nucleotide Dissociation Inhibitor) activity toward heterotrimeric G-alpha proteins, thereby regulating signal transduction to facilitate neuroprotective responses in the wake of hypoxia and associated oxidative stress. This is Neuroglobin from Homo sapiens (Human).